A 645-amino-acid chain; its full sequence is MDFNREHKINFLYVLAAMVGVLLIQSLVSQPDHIRTIPYSEFQQLASQGKVTDLVVGPTRITGTLKDAPKDSPRHFSTLRVDQALAQSLTNENVTFSGEPEPGPWPTILGWLMPIVGFALVWMFLIRPMSMGPGMDGMMSIGKSKARVYVEKDIKVTFADVAGVDEAKDELKEVVSFLRDPRSYGRLGARVPKGVLLVGPPGTGKTLLARAVAGEAGVAFFSISGSEFVEMFVGVGAARVRDLFEQARKHAPAIVFIDELDSLGRARGSAFPGGGGHDEKEQTLNQLLAELDGFDTSIGVVLLAATNRPEILDPALLRAGRFDRQVLVDRPDKKGRAQILEVHLKKIALAPGVPVDDIAALTPGFSGADLANLVNEAAILATRRHAENVSLDDFTQAIERIVAGLEKRNRLLNAHEREVVAHHEMGHALVAMTLPGVDMVQKISIIPHGIAALGYTIQRPTEERFLMDRAELMNRMAVLLGGRAAERLIFADVSTGAADDLAKASAIARSMVVRFGMDPTLGQVAYEPETTSALGLPNGSEWRPRQYGEQTAAAIDAAVRELIETASACAFSILQANRGLLESAARDLLAKETMSGEELQALLSQLGGGAASASVLRDGGDGAADAGQDRSGEHRALTVEGGEAQ.

Residues M1–K8 are Cytoplasmic-facing. Residues I9 to S29 form a helical membrane-spanning segment. The Periplasmic segment spans residues Q30–W105. A helical membrane pass occupies residues P106–I126. At R127–Q645 the chain is on the cytoplasmic side. G199–T206 serves as a coordination point for ATP. H423 is a binding site for Zn(2+). E424 is a catalytic residue. Residues H427 and D500 each contribute to the Zn(2+) site. The segment at S612–Q645 is disordered. Over residues G627–L637 the composition is skewed to basic and acidic residues.

It in the central section; belongs to the AAA ATPase family. The protein in the C-terminal section; belongs to the peptidase M41 family. As to quaternary structure, homohexamer. It depends on Zn(2+) as a cofactor.

It is found in the cell inner membrane. In terms of biological role, acts as a processive, ATP-dependent zinc metallopeptidase for both cytoplasmic and membrane proteins. Plays a role in the quality control of integral membrane proteins. The chain is ATP-dependent zinc metalloprotease FtsH from Paraburkholderia phymatum (strain DSM 17167 / CIP 108236 / LMG 21445 / STM815) (Burkholderia phymatum).